Consider the following 625-residue polypeptide: MTNNMNNYPLLSLINSPEDLRLLNKDQLPQLCQELRAYLLESVSQTSGHLASGLGTVELTVALHYVYKTPFDQLIWDVGHQAYPHKILTGRREQMSTIRQKGGIHPFPWREESEFDVLSVGHSSTSISAGLGIAVAAERENASRKTVCVIGDGSITAGMAFEALNHAGALHTDMLVILNDNEMSISENVGALNNHLARIFSGSLYSTLRDGSKKILDKVPPIKNFMKKTEEHMKGVMFSPESTLFEELGFNYIGPVDGHNIDELVATLTNMRNLKGPQFLHIKTKKGKGYAPAEKDPIGFHGVPKFDPISGELPKNNSKPTYSKIFGDWLCEMAEKDAKIIGITPAMREGSGMVEFSQRFPKQYFDVAIAEQHAVTFATGLAIGGYKPVVAIYSTFLQRAYDQLIHDVAIQNLPVLFAIDRAGIVGADGATHQGAFDISFMRCIPNMIIMTPSDENECRQMLYTGYQCGKPAAVRYPRGNAVGVKLTPLEMLPIGKSRLIREGQKIAILNFGTLLPSALELSEKLNATVVDMRFVKPIDIEMINMLAQTHDYLVTLEENAIQGGAGSAVAEVLNSSGKSTALLQLGLPDYFIPQATQQEALADLGLDTKGIEEKILNFIAKQGNL.

Thiamine diphosphate contacts are provided by residues His-80 and 121–123 (GHS). Residue Asp-152 participates in Mg(2+) binding. Residues 153 to 154 (GS), Asn-181, Tyr-290, and Glu-371 contribute to the thiamine diphosphate site. A Mg(2+)-binding site is contributed by Asn-181.

Belongs to the transketolase family. DXPS subfamily. In terms of assembly, homodimer. The cofactor is Mg(2+). It depends on thiamine diphosphate as a cofactor.

The catalysed reaction is D-glyceraldehyde 3-phosphate + pyruvate + H(+) = 1-deoxy-D-xylulose 5-phosphate + CO2. The protein operates within metabolic intermediate biosynthesis; 1-deoxy-D-xylulose 5-phosphate biosynthesis; 1-deoxy-D-xylulose 5-phosphate from D-glyceraldehyde 3-phosphate and pyruvate: step 1/1. Its function is as follows. Catalyzes the acyloin condensation reaction between C atoms 2 and 3 of pyruvate and glyceraldehyde 3-phosphate to yield 1-deoxy-D-xylulose-5-phosphate (DXP). This chain is 1-deoxy-D-xylulose-5-phosphate synthase, found in Haemophilus influenzae (strain PittGG).